The primary structure comprises 721 residues: BBSome complex member BBS2 (721 aa).

Positions 325-369 form a coiled coil; the sequence is KGNLLDTSVEQDLIRELSQKKQNLLLELRNYEESTKAELSSPLNE.

Part of BBSome complex, that contains BBS1, BBS2, BBS4, BBS5, BBS7, BBS8/TTC8, BBS9 and BBIP10. Interacts (via C-terminus) with BBS7. Interacts (via coiled coil domain) with MKKS. Interacts with CCDC28B. Interacts with DLEC1.

The protein localises to the cell projection. Its subcellular location is the cilium membrane. It localises to the cytoplasm. It is found in the cytoskeleton. The protein resides in the microtubule organizing center. The protein localises to the centrosome. Its subcellular location is the centriolar satellite. Functionally, the BBSome complex is thought to function as a coat complex required for sorting of specific membrane proteins to the primary cilia. The BBSome complex is required for ciliogenesis but is dispensable for centriolar satellite function. This ciliogenic function is mediated in part by the Rab8 GDP/GTP exchange factor, which localizes to the basal body and contacts the BBSome. Rab8(GTP) enters the primary cilium and promotes extension of the ciliary membrane. Firstly the BBSome associates with the ciliary membrane and binds to RAB3IP/Rabin8, the guanosyl exchange factor (GEF) for Rab8 and then the Rab8-GTP localizes to the cilium and promotes docking and fusion of carrier vesicles to the base of the ciliary membrane. The BBSome complex, together with the LTZL1, controls SMO ciliary trafficking and contributes to the sonic hedgehog (SHH) pathway regulation. Required for proper BBSome complex assembly and its ciliary localization. This Mus musculus (Mouse) protein is BBSome complex member BBS2 (Bbs2).